Here is a 295-residue protein sequence, read N- to C-terminus: MSVKHFIQITKPGIIFGNVLSVAGGFFLASKGHVDFALFLAVVIGTSLVVASGCVFNNCIDRDIDHKMERTKNRVMVQGGMSLPLALIYATLLGVAGFSLLYVQANPLSAFCALIGFIVYVGFYSLWLKRKSVHGTLVGSLSGAMPPVIGYCAVSNSFDLAAVTLLVMFSLWQMPHSFAIAIFRFKDYSAANIPVLPVARGILAAKKQIVLYVLAFVLATLMLTLGGYAGLGYLAVAAAMGLYWLYMAWGGYKAEDDSKWARKVFGFSILTVTALSVMMGVDSQTAADVLMTYAR.

Topologically, residues 1–9 are cytoplasmic; sequence MSVKHFIQI. The helical transmembrane segment at 10–28 threads the bilayer; sequence TKPGIIFGNVLSVAGGFFL. Topologically, residues 29–37 are periplasmic; it reads ASKGHVDFA. A helical membrane pass occupies residues 38–56; sequence LFLAVVIGTSLVVASGCVF. At 57-78 the chain is on the cytoplasmic side; that stretch reads NNCIDRDIDHKMERTKNRVMVQ. Residues 79-97 form a helical membrane-spanning segment; the sequence is GGMSLPLALIYATLLGVAG. Topologically, residues 98 to 107 are periplasmic; sequence FSLLYVQANP. A helical transmembrane segment spans residues 108–126; that stretch reads LSAFCALIGFIVYVGFYSL. Topologically, residues 127–197 are cytoplasmic; it reads WLKRKSVHGT…YSAANIPVLP (71 aa). A helical membrane pass occupies residues 198–216; it reads VARGILAAKKQIVLYVLAF. Over 217-228 the chain is Periplasmic; sequence VLATLMLTLGGY. A helical membrane pass occupies residues 229 to 247; the sequence is AGLGYLAVAAAMGLYWLYM. Residues 248–268 lie on the Cytoplasmic side of the membrane; it reads AWGGYKAEDDSKWARKVFGFS. Residues 269-287 traverse the membrane as a helical segment; the sequence is ILTVTALSVMMGVDSQTAA. Topologically, residues 288–295 are periplasmic; the sequence is DVLMTYAR.

The protein belongs to the UbiA prenyltransferase family. It depends on Mg(2+) as a cofactor. The cofactor is Ca(2+).

It is found in the cell inner membrane. It catalyses the reaction heme b + (2E,6E)-farnesyl diphosphate + H2O = Fe(II)-heme o + diphosphate. Functionally, converts protoheme IX and farnesyl diphosphate to heme O. This chain is Protoheme IX farnesyltransferase (cyoE), found in Pseudomonas putida (Arthrobacter siderocapsulatus).